A 707-amino-acid polypeptide reads, in one-letter code: Choline transporter-like protein 4 (707 aa).

Topologically, residues 1–32 (MGEKQDPDKAYGKPAKYDPSFRGPIRNRSCTD) are cytoplasmic. The chain crosses the membrane as a helical span at residues 33–53 (IICCVLFFVFILGYIAVGLVA). Residues 54–226 (WVYGDPQQVL…KIFEDFAQSW (173 aa)) are Extracellular-facing. Residues N67, N142, N184, and N195 are each glycosylated (N-linked (GlcNAc...) asparagine). Residues 227-247 (YWILAALGVALVLSLLFVLLL) form a helical membrane-spanning segment. Residues 248–249 (RL) lie on the Cytoplasmic side of the membrane. The chain crosses the membrane as a helical span at residues 250–270 (VAGPLVFVLIIGVLGVLAYGI). The Extracellular portion of the chain corresponds to 271-306 (YHCWNEYRLLRDKGASISQLGFTTNLSAYSSVQETW). N295 carries an N-linked (GlcNAc...) asparagine glycan. The chain crosses the membrane as a helical span at residues 307-327 (LAALILLAVLEGILLLMLIFL). The Cytoplasmic portion of the chain corresponds to 328–355 (RQRIRIAIALLEEASRAVGQMMSTLFYP). Residues 356–376 (LVTFVLLLVCIAYWAMTALYL) traverse the membrane as a helical segment. The Extracellular portion of the chain corresponds to 377 to 452 (ATSGQPQYVL…GVLGLFWTIN (76 aa)). N-linked (GlcNAc...) asparagine glycans are attached at residues N390, N402, and N413. The chain crosses the membrane as a helical span at residues 453–473 (WVLALGQCVLAGAFASFYWAF). Residues 474–498 (HKPRDIPTFPLSSAFIRTLRYHTGS) lie on the Cytoplasmic side of the membrane. A helical membrane pass occupies residues 499-519 (LAFGALILTLVQIARAILEYI). Residues 520–557 (DHKLRGAQNPVARCIMCCFKCCLWCLEKFIKFLNRNAY) are Extracellular-facing. A helical transmembrane segment spans residues 558–578 (IMIAIYGKNFCVSAKNAFMLL). The Cytoplasmic segment spans residues 579-594 (MRNIVRVVVLDKVTDL). The helical transmembrane segment at 595-615 (LLFFGKLLVVGGVGVLSFFFF) threads the bilayer. Topologically, residues 616 to 635 (TGRIQGLGKDFESPQLNYYW) are extracellular. Residues 636–656 (LPIMTSIMGAYVIASGFFSVF) traverse the membrane as a helical segment. Residues 657-707 (GMCVDTLFLCFLEDLERNDGSLDRPYYMSKALLKILGKKNEVPSGDKKRKK) lie on the Cytoplasmic side of the membrane.

It belongs to the CTL (choline transporter-like) family. N-glycosylated; N-glycosylation of Asn-677 and Asn-390 is required for a proper thiamine pyrophosphate uptake.

The protein localises to the membrane. Its subcellular location is the apical cell membrane. The enzyme catalyses choline(out) + n H(+)(in) = choline(in) + n H(+)(out). It carries out the reaction thiamine diphosphate(out) = thiamine diphosphate(in). Choline transporter that plays a role in the choline-acetylcholine system and is required to the efferent innervation of hair cells in the olivocochlear bundle for the maintenance of physiological function of outer hair cells and the protection of hair cells from acoustic injury. Also described as a thiamine pyrophosphate transporter in colon, may mediate the absorption of microbiota-generated thiamine pyrophosphate and contribute to host thiamine (vitamin B1) homeostasis. The protein is Choline transporter-like protein 4 of Sus scrofa (Pig).